A 65-amino-acid chain; its full sequence is Large ribosomal subunit protein bL35 (65 aa).

Positions 1 to 11 (MPKIKTRRSAA) are enriched in basic residues. The interval 1–25 (MPKIKTRRSAAKRFSVTGSGKFRRR) is disordered.

This sequence belongs to the bacterial ribosomal protein bL35 family.

This chain is Large ribosomal subunit protein bL35, found in Nitratidesulfovibrio vulgaris (strain ATCC 29579 / DSM 644 / CCUG 34227 / NCIMB 8303 / VKM B-1760 / Hildenborough) (Desulfovibrio vulgaris).